The primary structure comprises 299 residues: Ribosomal RNA small subunit methyltransferase H (299 aa).

S-adenosyl-L-methionine contacts are provided by residues glycine 36 to histidine 38, aspartate 55, tyrosine 82, aspartate 103, and glutamine 110. 2 stretches are compositionally biased toward basic and acidic residues: residues proline 269–arginine 282 and arginine 289–aspartate 299. The interval proline 269–aspartate 299 is disordered.

This sequence belongs to the methyltransferase superfamily. RsmH family.

It localises to the cytoplasm. It carries out the reaction cytidine(1402) in 16S rRNA + S-adenosyl-L-methionine = N(4)-methylcytidine(1402) in 16S rRNA + S-adenosyl-L-homocysteine + H(+). Functionally, specifically methylates the N4 position of cytidine in position 1402 (C1402) of 16S rRNA. The polypeptide is Ribosomal RNA small subunit methyltransferase H (Thermotoga maritima (strain ATCC 43589 / DSM 3109 / JCM 10099 / NBRC 100826 / MSB8)).